Here is a 345-residue protein sequence, read N- to C-terminus: Phosphate acyltransferase (345 aa).

Belongs to the PlsX family. In terms of assembly, homodimer. Probably interacts with PlsY.

The protein localises to the cytoplasm. It carries out the reaction a fatty acyl-[ACP] + phosphate = an acyl phosphate + holo-[ACP]. It participates in lipid metabolism; phospholipid metabolism. Catalyzes the reversible formation of acyl-phosphate (acyl-PO(4)) from acyl-[acyl-carrier-protein] (acyl-ACP). This enzyme utilizes acyl-ACP as fatty acyl donor, but not acyl-CoA. In Chromobacterium violaceum (strain ATCC 12472 / DSM 30191 / JCM 1249 / CCUG 213 / NBRC 12614 / NCIMB 9131 / NCTC 9757 / MK), this protein is Phosphate acyltransferase.